The following is a 634-amino-acid chain: uncharacterized protein (634 aa).

The signal sequence occupies residues 1–40; sequence MWLQQRLKGLPGLLSSSWARRLLCLLGLLVLLLWFAGSGA. At 41–589 the chain is on the extracellular side; the sequence is RRAAGGLQLL…DEHMAQQDPG (549 aa). Asn-363 is a glycosylation site (N-linked (GlcNAc...) asparagine). A helical membrane pass occupies residues 590–610; that stretch reads LPFLFWFSVASLITLFHLFLF. Topologically, residues 611-634 are cytoplasmic; it reads KLIYNEYCGPGAKPFFRNKEDPSV.

It is found in the membrane. This is an uncharacterized protein from Bos taurus (Bovine).